The sequence spans 360 residues: UDP-N-acetylglucosamine--N-acetylmuramyl-(pentapeptide) pyrophosphoryl-undecaprenol N-acetylglucosamine transferase (360 aa).

UDP-N-acetyl-alpha-D-glucosamine-binding positions include Thr15–Gly17, Asn128, Arg164, Ser192, Ile247, and Gln292.

It belongs to the glycosyltransferase 28 family. MurG subfamily.

Its subcellular location is the cell inner membrane. The catalysed reaction is di-trans,octa-cis-undecaprenyl diphospho-N-acetyl-alpha-D-muramoyl-L-alanyl-D-glutamyl-meso-2,6-diaminopimeloyl-D-alanyl-D-alanine + UDP-N-acetyl-alpha-D-glucosamine = di-trans,octa-cis-undecaprenyl diphospho-[N-acetyl-alpha-D-glucosaminyl-(1-&gt;4)]-N-acetyl-alpha-D-muramoyl-L-alanyl-D-glutamyl-meso-2,6-diaminopimeloyl-D-alanyl-D-alanine + UDP + H(+). It participates in cell wall biogenesis; peptidoglycan biosynthesis. Its function is as follows. Cell wall formation. Catalyzes the transfer of a GlcNAc subunit on undecaprenyl-pyrophosphoryl-MurNAc-pentapeptide (lipid intermediate I) to form undecaprenyl-pyrophosphoryl-MurNAc-(pentapeptide)GlcNAc (lipid intermediate II). The chain is UDP-N-acetylglucosamine--N-acetylmuramyl-(pentapeptide) pyrophosphoryl-undecaprenol N-acetylglucosamine transferase from Blochmanniella floridana.